The sequence spans 109 residues: Large ribosomal subunit protein uL24 (109 aa).

It belongs to the universal ribosomal protein uL24 family. Part of the 50S ribosomal subunit.

Its function is as follows. One of two assembly initiator proteins, it binds directly to the 5'-end of the 23S rRNA, where it nucleates assembly of the 50S subunit. One of the proteins that surrounds the polypeptide exit tunnel on the outside of the subunit. The polypeptide is Large ribosomal subunit protein uL24 (Ehrlichia ruminantium (strain Gardel)).